The following is a 375-amino-acid chain: uncharacterized protein (375 aa).

This is an uncharacterized protein from Ureaplasma parvum serovar 3 (strain ATCC 700970).